The sequence spans 717 residues: Ribosomal RNA large subunit methyltransferase K/L (717 aa).

Positions 44–155 (DAYKVCIYSY…KQFVNVFLCL (112 aa)) constitute a THUMP domain.

Belongs to the methyltransferase superfamily. RlmKL family.

The protein localises to the cytoplasm. It carries out the reaction guanosine(2445) in 23S rRNA + S-adenosyl-L-methionine = N(2)-methylguanosine(2445) in 23S rRNA + S-adenosyl-L-homocysteine + H(+). The enzyme catalyses guanosine(2069) in 23S rRNA + S-adenosyl-L-methionine = N(2)-methylguanosine(2069) in 23S rRNA + S-adenosyl-L-homocysteine + H(+). Its function is as follows. Specifically methylates the guanine in position 2445 (m2G2445) and the guanine in position 2069 (m7G2069) of 23S rRNA. The chain is Ribosomal RNA large subunit methyltransferase K/L from Francisella tularensis subsp. tularensis (strain SCHU S4 / Schu 4).